A 154-amino-acid polypeptide reads, in one-letter code: 6,7-dimethyl-8-ribityllumazine synthase (154 aa).

5-amino-6-(D-ribitylamino)uracil is bound by residues phenylalanine 22, 56-58, and 80-82; these read AFE and AVI. A (2S)-2-hydroxy-3-oxobutyl phosphate-binding site is contributed by 85-86; sequence ST. Histidine 88 (proton donor) is an active-site residue. Phenylalanine 113 is a 5-amino-6-(D-ribitylamino)uracil binding site. Arginine 127 contacts (2S)-2-hydroxy-3-oxobutyl phosphate.

It belongs to the DMRL synthase family.

The enzyme catalyses (2S)-2-hydroxy-3-oxobutyl phosphate + 5-amino-6-(D-ribitylamino)uracil = 6,7-dimethyl-8-(1-D-ribityl)lumazine + phosphate + 2 H2O + H(+). The protein operates within cofactor biosynthesis; riboflavin biosynthesis; riboflavin from 2-hydroxy-3-oxobutyl phosphate and 5-amino-6-(D-ribitylamino)uracil: step 1/2. Its function is as follows. Catalyzes the formation of 6,7-dimethyl-8-ribityllumazine by condensation of 5-amino-6-(D-ribitylamino)uracil with 3,4-dihydroxy-2-butanone 4-phosphate. This is the penultimate step in the biosynthesis of riboflavin. The protein is 6,7-dimethyl-8-ribityllumazine synthase of Clostridium kluyveri (strain NBRC 12016).